Here is a 104-residue protein sequence, read N- to C-terminus: Type IV secretion system protein PtlB homolog (104 aa).

The chain crosses the membrane as a helical span at residues 30-50; sequence IALLGIWFSIAFLALFPVALL.

Belongs to the virB3 family.

The protein resides in the cell membrane. The sequence is that of Type IV secretion system protein PtlB homolog (ptlB) from Bordetella parapertussis (strain 12822 / ATCC BAA-587 / NCTC 13253).